The sequence spans 423 residues: Histidine--tRNA ligase (423 aa).

The protein belongs to the class-II aminoacyl-tRNA synthetase family. Homodimer.

Its subcellular location is the cytoplasm. It carries out the reaction tRNA(His) + L-histidine + ATP = L-histidyl-tRNA(His) + AMP + diphosphate + H(+). The sequence is that of Histidine--tRNA ligase from Laribacter hongkongensis (strain HLHK9).